Consider the following 412-residue polypeptide: MKNVVALILAGGQGTRLGVLTEKIAKPAVQFGGKYRLIDFTLSNCVNSGIYKIGVLTQYKPHLLNQHIGIGKPWDLDRKDGGVTILQPYYTEKKGVWYNGTADAVYRNIEFVDDYNPEYVVILSGDHIYSMDYNELLDYHKAKSALATVACMEVPLSEASRFGIMVTDLENRIIEFQEKPKQPKSTLASLGIYVFQWSFIREVLIEDAKNDQSSHDFGKDIIPKIIQTERVFAFPFDGYWKDVGTIYSYWESNLELTRPIPPFNIHDENWRIYTHSKEMPPAYIADSTKVKNSLISEGCEIYGAVSNSVLAQGVEIGKGSIVKNSVIMSNVRIGENCYIENAIIAENVVIGDFVKIGVGEFAESKLNKKVYNSEITVIGMDSIIESKVEIGKNCVVGIDMIVNKNLNSGEYI.

Residues Tyr98, Gly163, 178–179, and Ser189 each bind alpha-D-glucose 1-phosphate; that span reads EK.

Belongs to the bacterial/plant glucose-1-phosphate adenylyltransferase family. In terms of assembly, homotetramer.

It catalyses the reaction alpha-D-glucose 1-phosphate + ATP + H(+) = ADP-alpha-D-glucose + diphosphate. It functions in the pathway glycan biosynthesis; glycogen biosynthesis. Its function is as follows. Involved in the biosynthesis of ADP-glucose, a building block required for the elongation reactions to produce glycogen. Catalyzes the reaction between ATP and alpha-D-glucose 1-phosphate (G1P) to produce pyrophosphate and ADP-Glc. This is Glucose-1-phosphate adenylyltransferase from Thermosipho africanus (strain TCF52B).